A 317-amino-acid chain; its full sequence is Apolipoprotein E (317 aa).

A signal peptide spans 1-18 (MKALWVALVVTLLAGCRA). 8 repeat units span residues 79–100 (ALME…EQLS), 101–122 (PVAQ…ARLG), 123–144 (TDME…AMLG), 145–166 (QTTD…KRLL), 167–188 (RDAE…EGAE), 189–210 (RSVS…LGTA), 211–232 (TTST…QKLR), and 233–254 (GRLE…EQLE). The 8 X 22 AA approximate tandem repeats stretch occupies residues 79–254 (ALMEETMKEV…RLDKMREQLE (176 aa)). Methionine 142 bears the Methionine sulfoxide mark. The interval 157 to 167 (HLRKLRKRLLR) is LDL and other lipoprotein receptors binding. Residue 161–164 (LRKR) coordinates heparin. The tract at residues 209–289 (TATTSTLGSQ…GWFQPLVEDL (81 aa)) is lipid-binding and lipoprotein association. A glycan (O-linked (GalNAc...) threonine) is linked at threonine 211. 228 to 235 (GQKLRGRL) contacts heparin. Residues 265 to 317 (SQMRLQAETFQARLKGWFQPLVEDLQRQWAGLVEKVQQLAVGTTPTPAASKNQ) form a homooligomerization region. A specificity for association with VLDL region spans residues 277 to 289 (RLKGWFQPLVEDL). The O-linked (GalNAc...) threonine glycan is linked to threonine 310.

The protein belongs to the apolipoprotein A1/A4/E family. In terms of assembly, homotetramer. May interact with ABCA1; functionally associated with ABCA1 in the biogenesis of HDLs. May interact with APP/A4 amyloid-beta peptide; the interaction is extremely stable in vitro but its physiological significance is unclear. May interact with MAPT. May interact with MAP2. In the cerebrospinal fluid, interacts with secreted SORL1. Interacts with PMEL; this allows the loading of PMEL luminal fragment on ILVs to induce fibril nucleation. APOE exists as multiple glycosylated and sialylated glycoforms within cells and in plasma. The extent of glycosylation and sialylation are tissue and context specific. Post-translationally, glycated in plasma VLDL. In terms of processing, phosphorylated by FAM20C in the extracellular medium.

The protein resides in the secreted. The protein localises to the extracellular space. Its subcellular location is the extracellular matrix. It is found in the extracellular vesicle. It localises to the endosome. The protein resides in the multivesicular body. In terms of biological role, APOE is an apolipoprotein, a protein associating with lipid particles, that mainly functions in lipoprotein-mediated lipid transport between organs via the plasma and interstitial fluids. APOE is a core component of plasma lipoproteins and is involved in their production, conversion and clearance. Apolipoproteins are amphipathic molecules that interact both with lipids of the lipoprotein particle core and the aqueous environment of the plasma. As such, APOE associates with chylomicrons, chylomicron remnants, very low density lipoproteins (VLDL) and intermediate density lipoproteins (IDL) but shows a preferential binding to high-density lipoproteins (HDL). It also binds a wide range of cellular receptors including the LDL receptor/LDLR and the very low-density lipoprotein receptor/VLDLR that mediate the cellular uptake of the APOE-containing lipoprotein particles. Finally, APOE also has a heparin-binding activity and binds heparan-sulfate proteoglycans on the surface of cells, a property that supports the capture and the receptor-mediated uptake of APOE-containing lipoproteins by cells. This is Apolipoprotein E (APOE) from Camelus dromedarius (Dromedary).